The sequence spans 353 residues: Photosystem II D2 protein (353 aa).

Thr-2 carries the post-translational modification N-acetylthreonine. Position 2 is a phosphothreonine (Thr-2). A helical transmembrane segment spans residues 41–61 (CAYFALGGWFTGTTFVTSWYT). Position 118 (His-118) interacts with chlorophyll a. The chain crosses the membrane as a helical span at residues 125 to 141 (GFMLRQFELARSVQLRP). Pheophytin a-binding residues include Gln-130 and Asn-143. Residues 153–166 (VFVSVFLIYPLGQS) form a helical membrane-spanning segment. His-198 contacts chlorophyll a. Residues 208-228 (AALLCAIHGATVENTLFEDGD) form a helical membrane-spanning segment. His-215 and Phe-262 together coordinate a plastoquinone. His-215 serves as a coordination point for Fe cation. His-269 lines the Fe cation pocket. A helical transmembrane segment spans residues 279–295 (GLWMSALGVVGLALNLR).

Belongs to the reaction center PufL/M/PsbA/D family. PSII is composed of 1 copy each of membrane proteins PsbA, PsbB, PsbC, PsbD, PsbE, PsbF, PsbH, PsbI, PsbJ, PsbK, PsbL, PsbM, PsbT, PsbX, PsbY, PsbZ, Psb30/Ycf12, at least 3 peripheral proteins of the oxygen-evolving complex and a large number of cofactors. It forms dimeric complexes. It depends on The D1/D2 heterodimer binds P680, chlorophylls that are the primary electron donor of PSII, and subsequent electron acceptors. It shares a non-heme iron and each subunit binds pheophytin, quinone, additional chlorophylls, carotenoids and lipids. There is also a Cl(-1) ion associated with D1 and D2, which is required for oxygen evolution. The PSII complex binds additional chlorophylls, carotenoids and specific lipids. as a cofactor.

The protein resides in the plastid. It is found in the chloroplast thylakoid membrane. It catalyses the reaction 2 a plastoquinone + 4 hnu + 2 H2O = 2 a plastoquinol + O2. Functionally, photosystem II (PSII) is a light-driven water:plastoquinone oxidoreductase that uses light energy to abstract electrons from H(2)O, generating O(2) and a proton gradient subsequently used for ATP formation. It consists of a core antenna complex that captures photons, and an electron transfer chain that converts photonic excitation into a charge separation. The D1/D2 (PsbA/PsbD) reaction center heterodimer binds P680, the primary electron donor of PSII as well as several subsequent electron acceptors. D2 is needed for assembly of a stable PSII complex. The chain is Photosystem II D2 protein from Pelargonium hortorum (Common geranium).